The primary structure comprises 357 residues: U5 small nuclear ribonucleoprotein 40 kDa protein (357 aa).

K18 participates in a covalent cross-link: Glycyl lysine isopeptide (Lys-Gly) (interchain with G-Cter in SUMO2). Position 21 is an asymmetric dimethylarginine (R21). WD repeat units lie at residues G64–A103, G107–R146, G149–T189, Q191–T230, G233–R272, N283–K322, and G325–Q357. Residue K270 forms a Glycyl lysine isopeptide (Lys-Gly) (interchain with G-Cter in SUMO2) linkage.

In terms of assembly, component of the pre-catalytic and catalytic spliceosome complexes. Component of the postcatalytic spliceosome P complex. Part of the U5 snRNP complex. Interacts with PRPF8. Component of the U4/U6-U5 tri-snRNP complex composed of the U4, U6 and U5 snRNAs and at least PRPF3, PRPF4, PRPF6, PRPF8, PRPF31, SNRNP200, TXNL4A, WDR57, SNRNP40, DDX23, CD2BP2, PPIH, SNU13, EFTUD2, SART1 and USP39. Component of the minor spliceosome, which splices U12-type introns.

It is found in the nucleus. In terms of biological role, required for pre-mRNA splicing as component of the activated spliceosome. Component of the U5 small nuclear ribonucleoprotein (snRNP) complex and the U4/U6-U5 tri-snRNP complex, building blocks of the spliceosome. As a component of the minor spliceosome, involved in the splicing of U12-type introns in pre-mRNAs. In Homo sapiens (Human), this protein is U5 small nuclear ribonucleoprotein 40 kDa protein (SNRNP40).